The chain runs to 245 residues: Small ribosomal subunit protein uS2 (245 aa).

Belongs to the universal ribosomal protein uS2 family.

In Dehalococcoides mccartyi (strain ATCC BAA-2266 / KCTC 15142 / 195) (Dehalococcoides ethenogenes (strain 195)), this protein is Small ribosomal subunit protein uS2.